A 91-amino-acid polypeptide reads, in one-letter code: Large ribosomal subunit protein eL37B (91 aa).

Zn(2+) contacts are provided by C19, C22, C34, and C37. The C4-type zinc finger occupies C19–C37.

Belongs to the eukaryotic ribosomal protein eL37 family. As to quaternary structure, component of the large ribosomal subunit (LSU). Mature yeast ribosomes consist of a small (40S) and a large (60S) subunit. The 40S small subunit contains 1 molecule of ribosomal RNA (18S rRNA) and at least 33 different proteins. The large 60S subunit contains 3 rRNA molecules (25S, 5.8S and 5S rRNA) and at least 46 different proteins. Zn(2+) serves as cofactor.

The protein localises to the cytoplasm. Functionally, component of the ribosome, a large ribonucleoprotein complex responsible for the synthesis of proteins in the cell. The small ribosomal subunit (SSU) binds messenger RNAs (mRNAs) and translates the encoded message by selecting cognate aminoacyl-transfer RNA (tRNA) molecules. The large subunit (LSU) contains the ribosomal catalytic site termed the peptidyl transferase center (PTC), which catalyzes the formation of peptide bonds, thereby polymerizing the amino acids delivered by tRNAs into a polypeptide chain. The nascent polypeptides leave the ribosome through a tunnel in the LSU and interact with protein factors that function in enzymatic processing, targeting, and the membrane insertion of nascent chains at the exit of the ribosomal tunnel. This Schizosaccharomyces pombe (strain 972 / ATCC 24843) (Fission yeast) protein is Large ribosomal subunit protein eL37B (rpl3702).